A 794-amino-acid chain; its full sequence is DNA ligase (794 aa).

Residues 35–39, 84–85, and glutamate 126 each bind NAD(+); these read DAEYD and SL. Lysine 128 (N6-AMP-lysine intermediate) is an active-site residue. NAD(+) is bound by residues arginine 149, glutamate 186, lysine 302, and lysine 326. 4 residues coordinate Zn(2+): cysteine 420, cysteine 423, cysteine 450, and cysteine 456. In terms of domain architecture, BRCT spans 711–794; that stretch reads VEGLPLAGQT…KLLDEYGVAH (84 aa).

The protein belongs to the NAD-dependent DNA ligase family. LigA subfamily. Requires Mg(2+) as cofactor. The cofactor is Mn(2+).

It catalyses the reaction NAD(+) + (deoxyribonucleotide)n-3'-hydroxyl + 5'-phospho-(deoxyribonucleotide)m = (deoxyribonucleotide)n+m + AMP + beta-nicotinamide D-nucleotide.. DNA ligase that catalyzes the formation of phosphodiester linkages between 5'-phosphoryl and 3'-hydroxyl groups in double-stranded DNA using NAD as a coenzyme and as the energy source for the reaction. It is essential for DNA replication and repair of damaged DNA. This Pseudomonas paraeruginosa (strain DSM 24068 / PA7) (Pseudomonas aeruginosa (strain PA7)) protein is DNA ligase.